The chain runs to 499 residues: T-cell activation inhibitor, mitochondrial (499 aa).

The stretch at 206–233 forms a coiled coil; it reads LRNSLPLRKELDRLKNELSELLQLSDIR.

As to expression, expressed in peripheral blood leukocytes, mainly in T-lymphocytes.

It is found in the mitochondrion. May regulate T-cell apoptosis. The chain is T-cell activation inhibitor, mitochondrial (TCAIM) from Mus musculus (Mouse).